A 221-amino-acid polypeptide reads, in one-letter code: Protein N-terminal glutamine amidohydrolase (221 aa).

Residue serine 2 is modified to N-acetylserine. Residues cysteine 23, histidine 79, and aspartate 97 contribute to the active site.

This sequence belongs to the NTAQ1 family. In terms of assembly, monomer.

It carries out the reaction N-terminal L-glutaminyl-[protein] + H2O = N-terminal L-glutamyl-[protein] + NH4(+). Functionally, mediates the side-chain deamidation of N-terminal glutamine residues to glutamate, an important step in N-end rule pathway of protein degradation. Conversion of the resulting N-terminal glutamine to glutamate renders the protein susceptible to arginylation, polyubiquitination and degradation as specified by the N-end rule. Does not act on substrates with internal or C-terminal glutamine and does not act on non-glutamine residues in any position. Involved in immune response. Controls the expression of specific defense-response genes, activates the synthesis pathway for the phytoalexin camalexin, and influences basal resistance to the hemibiotroph pathogen Pseudomonas syringae pv tomato (Pst). The sequence is that of Protein N-terminal glutamine amidohydrolase from Arabidopsis thaliana (Mouse-ear cress).